Reading from the N-terminus, the 613-residue chain is Arginine--tRNA ligase (613 aa).

The short motif at 123-133 is the 'HIGH' region element; the sequence is PNVAKPMHVGH.

Belongs to the class-I aminoacyl-tRNA synthetase family. As to quaternary structure, monomer.

The protein localises to the cytoplasm. It carries out the reaction tRNA(Arg) + L-arginine + ATP = L-arginyl-tRNA(Arg) + AMP + diphosphate. This Caulobacter sp. (strain K31) protein is Arginine--tRNA ligase.